Here is a 318-residue protein sequence, read N- to C-terminus: O-glucosyltransferase LpsA (318 aa).

Belongs to the glycosyltransferase 90 family.

Its pathway is protein modification; protein glycosylation. Functionally, involved in lipopolysaccharide core biosynthesis. The protein is O-glucosyltransferase LpsA (lpsA) of Dichelobacter nodosus (Bacteroides nodosus).